Reading from the N-terminus, the 512-residue chain is Cytochrome P450 4d1 (512 aa).

Heme is bound by residues E316 and C456.

It belongs to the cytochrome P450 family. It depends on heme as a cofactor.

It is found in the endoplasmic reticulum membrane. The protein resides in the microsome membrane. Involved in the metabolism of insect hormones and in the breakdown of synthetic insecticides. In Drosophila simulans (Fruit fly), this protein is Cytochrome P450 4d1 (Cyp4d1).